The primary structure comprises 805 residues: Centrosomal protein of 85 kDa-like (805 aa).

2 disordered regions span residues 1–27 and 50–89; these read MWGR…AGPD and RNNH…LSFK. Ser15 carries the post-translational modification Phosphoserine. Residues 60–74 are compositionally biased toward polar residues; it reads ASDSGDTGIGTSCSD. Ser207 bears the Phosphoserine mark. A coiled-coil region spans residues 439–682; sequence SQQGEFEQKL…LENQRQTDET (244 aa).

The protein belongs to the CEP85 family. In terms of tissue distribution, isoform 1 and isoform 4 are expressed in spleen, lymph, thymus, tonsil and peripheral blood leukocytes, with isoform 1 expressed at higher levels. Isoform 4 is detected in K-562 leukemia cells and in the blood of precursor T lymphoblastic lymphoma (T-ALL) patients.

It localises to the cytoplasm. The protein localises to the cytoskeleton. The protein resides in the microtubule organizing center. Its subcellular location is the centrosome. Its function is as follows. Plays an essential role in neuronal cell migration. The sequence is that of Centrosomal protein of 85 kDa-like from Homo sapiens (Human).